We begin with the raw amino-acid sequence, 463 residues long: Cysteine--tRNA ligase (463 aa).

Cys-28 provides a ligand contact to Zn(2+). The 'HIGH' region signature appears at 30-40; it reads VTIYDLCHIGH. 3 residues coordinate Zn(2+): Cys-209, His-234, and Glu-238. The 'KMSKS' region motif lies at 266 to 270; it reads KMSKS. Lys-269 contacts ATP.

It belongs to the class-I aminoacyl-tRNA synthetase family. In terms of assembly, monomer. Requires Zn(2+) as cofactor.

It localises to the cytoplasm. The catalysed reaction is tRNA(Cys) + L-cysteine + ATP = L-cysteinyl-tRNA(Cys) + AMP + diphosphate. This is Cysteine--tRNA ligase from Tolumonas auensis (strain DSM 9187 / NBRC 110442 / TA 4).